The primary structure comprises 527 residues: Glutamyl-tRNA reductase 1, chloroplastic (527 aa).

Residues 1-43 constitute a chloroplast transit peptide; the sequence is MAGATSATAAAGAFAAAKARGPAAACPWLVAAGGRRRSGVVRC. Residues 124 to 127, serine 184, 189 to 191, and glutamine 195 each bind substrate; these read TCNR and EGQ. Residue cysteine 125 is the Nucleophile of the active site. NADP(+) is bound at residue 266 to 271; it reads GAGKMG.

This sequence belongs to the glutamyl-tRNA reductase family. Homodimer.

Its subcellular location is the plastid. It localises to the chloroplast. It carries out the reaction (S)-4-amino-5-oxopentanoate + tRNA(Glu) + NADP(+) = L-glutamyl-tRNA(Glu) + NADPH + H(+). It participates in porphyrin-containing compound metabolism; protoporphyrin-IX biosynthesis; 5-aminolevulinate from L-glutamyl-tRNA(Glu): step 1/2. Functionally, catalyzes the NADPH-dependent reduction of glutamyl-tRNA(Glu) to glutamate 1-semialdehyde (GSA). The chain is Glutamyl-tRNA reductase 1, chloroplastic (HEMA1) from Hordeum vulgare (Barley).